Here is a 214-residue protein sequence, read N- to C-terminus: Large ribosomal subunit protein bL25 (214 aa).

The interval 193–214 (PRAAAEEEDTGAEGDVEAADAE) is disordered. A compositionally biased stretch (acidic residues) spans 198-214 (EEEDTGAEGDVEAADAE).

Belongs to the bacterial ribosomal protein bL25 family. CTC subfamily. As to quaternary structure, part of the 50S ribosomal subunit; part of the 5S rRNA/L5/L18/L25 subcomplex. Contacts the 5S rRNA. Binds to the 5S rRNA independently of L5 and L18.

In terms of biological role, this is one of the proteins that binds to the 5S RNA in the ribosome where it forms part of the central protuberance. The sequence is that of Large ribosomal subunit protein bL25 from Nitrosococcus oceani (strain ATCC 19707 / BCRC 17464 / JCM 30415 / NCIMB 11848 / C-107).